We begin with the raw amino-acid sequence, 75 residues long: Tetrahydromethanopterin S-methyltransferase subunit F (75 aa).

A helical transmembrane segment spans residues 53 to 73 (FAGLACGMVFAGVLLVPLLLL).

The protein belongs to the MtrF family. As to quaternary structure, the complex is composed of 8 subunits; MtrA, MtrB, MtrC, MtrD, MtrE, MtrF, MtrG and MtrH.

The protein localises to the cell membrane. The enzyme catalyses 5-methyl-5,6,7,8-tetrahydromethanopterin + coenzyme M + 2 Na(+)(in) = 5,6,7,8-tetrahydromethanopterin + methyl-coenzyme M + 2 Na(+)(out). Its pathway is one-carbon metabolism; methanogenesis from CO(2); methyl-coenzyme M from 5,10-methylene-5,6,7,8-tetrahydromethanopterin: step 2/2. Functionally, part of a complex that catalyzes the formation of methyl-coenzyme M and tetrahydromethanopterin from coenzyme M and methyl-tetrahydromethanopterin. This is an energy-conserving, sodium-ion translocating step. The polypeptide is Tetrahydromethanopterin S-methyltransferase subunit F (Methanopyrus kandleri (strain AV19 / DSM 6324 / JCM 9639 / NBRC 100938)).